A 778-amino-acid polypeptide reads, in one-letter code: uncharacterized protein (778 aa).

Residues 1 to 92 (MSFVIAVPEA…GARSYVVAEA (92 aa)) enclose the PE domain. Disordered regions lie at residues 125–163 (ADGT…AGLI), 372–510 (TGLA…GDAF), and 718–778 (QGGL…GADG). 3 stretches are compositionally biased toward gly residues: residues 402–429 (NQTG…GGLG), 436–510 (DGTG…GDAF), and 718–763 (QGGL…GSSG).

Belongs to the mycobacterial PE family. PGRS subfamily.

This is an uncharacterized protein from Mycobacterium tuberculosis (strain CDC 1551 / Oshkosh).